Reading from the N-terminus, the 868-residue chain is Probable inorganic carbon transporter subunit DabA (868 aa).

Positions 392, 394, 574, and 589 each coordinate Zn(2+).

Belongs to the inorganic carbon transporter (TC 9.A.2) DabA family. As to quaternary structure, forms a complex with DabB. Requires Zn(2+) as cofactor.

It localises to the cell membrane. In terms of biological role, part of an energy-coupled inorganic carbon pump. This chain is Probable inorganic carbon transporter subunit DabA, found in Bacillus cereus (strain B4264).